A 383-amino-acid chain; its full sequence is Acetylornithine deacetylase (383 aa).

His-80 lines the Zn(2+) pocket. Residue Asp-82 is part of the active site. Asp-112 is a binding site for Zn(2+). Glu-144 is a catalytic residue. Zn(2+) contacts are provided by Glu-145, Glu-169, and His-355.

Belongs to the peptidase M20A family. ArgE subfamily. Homodimer. Requires Zn(2+) as cofactor. The cofactor is Co(2+). Glutathione serves as cofactor.

Its subcellular location is the cytoplasm. It carries out the reaction N(2)-acetyl-L-ornithine + H2O = L-ornithine + acetate. The protein operates within amino-acid biosynthesis; L-arginine biosynthesis; L-ornithine from N(2)-acetyl-L-ornithine (linear): step 1/1. Catalyzes the hydrolysis of the amide bond of N(2)-acetylated L-amino acids. Cleaves the acetyl group from N-acetyl-L-ornithine to form L-ornithine, an intermediate in L-arginine biosynthesis pathway, and a branchpoint in the synthesis of polyamines. This Escherichia coli (strain K12 / MC4100 / BW2952) protein is Acetylornithine deacetylase.